The chain runs to 240 residues: Ribosomal RNA small subunit methyltransferase G (240 aa).

S-adenosyl-L-methionine is bound by residues Gly77, Phe82, 128 to 129 (AE), and Arg148. The segment at 217-240 (EKRSKTPKKYPRKAGTPNKSPLLK) is disordered.

This sequence belongs to the methyltransferase superfamily. RNA methyltransferase RsmG family.

It is found in the cytoplasm. Its function is as follows. Specifically methylates the N7 position of guanine in position 535 of 16S rRNA. This Staphylococcus carnosus (strain TM300) protein is Ribosomal RNA small subunit methyltransferase G.